Reading from the N-terminus, the 316-residue chain is 4-hydroxy-3-methylbut-2-enyl diphosphate reductase (316 aa).

Position 12 (C12) interacts with [4Fe-4S] cluster. 2 residues coordinate (2E)-4-hydroxy-3-methylbut-2-enyl diphosphate: H41 and H74. Residues H41 and H74 each contribute to the dimethylallyl diphosphate site. H41 and H74 together coordinate isopentenyl diphosphate. C96 contacts [4Fe-4S] cluster. H124 lines the (2E)-4-hydroxy-3-methylbut-2-enyl diphosphate pocket. Residue H124 coordinates dimethylallyl diphosphate. Residue H124 participates in isopentenyl diphosphate binding. The active-site Proton donor is E126. (2E)-4-hydroxy-3-methylbut-2-enyl diphosphate is bound at residue T169. Position 199 (C199) interacts with [4Fe-4S] cluster. Positions 227, 228, 229, and 271 each coordinate (2E)-4-hydroxy-3-methylbut-2-enyl diphosphate. Residues S227, S228, N229, and S271 each coordinate dimethylallyl diphosphate. Isopentenyl diphosphate-binding residues include S227, S228, N229, and S271.

This sequence belongs to the IspH family. [4Fe-4S] cluster is required as a cofactor.

The enzyme catalyses isopentenyl diphosphate + 2 oxidized [2Fe-2S]-[ferredoxin] + H2O = (2E)-4-hydroxy-3-methylbut-2-enyl diphosphate + 2 reduced [2Fe-2S]-[ferredoxin] + 2 H(+). It catalyses the reaction dimethylallyl diphosphate + 2 oxidized [2Fe-2S]-[ferredoxin] + H2O = (2E)-4-hydroxy-3-methylbut-2-enyl diphosphate + 2 reduced [2Fe-2S]-[ferredoxin] + 2 H(+). Its pathway is isoprenoid biosynthesis; dimethylallyl diphosphate biosynthesis; dimethylallyl diphosphate from (2E)-4-hydroxy-3-methylbutenyl diphosphate: step 1/1. It participates in isoprenoid biosynthesis; isopentenyl diphosphate biosynthesis via DXP pathway; isopentenyl diphosphate from 1-deoxy-D-xylulose 5-phosphate: step 6/6. In terms of biological role, catalyzes the conversion of 1-hydroxy-2-methyl-2-(E)-butenyl 4-diphosphate (HMBPP) into a mixture of isopentenyl diphosphate (IPP) and dimethylallyl diphosphate (DMAPP). Acts in the terminal step of the DOXP/MEP pathway for isoprenoid precursor biosynthesis. The chain is 4-hydroxy-3-methylbut-2-enyl diphosphate reductase from Xylella fastidiosa (strain M23).